A 159-amino-acid polypeptide reads, in one-letter code: Probable minor fimbrial protein (159 aa).

The propeptide at 1–6 (MKKMHG) is leader sequence. Phe-7 is modified (N-methylphenylalanine). A helical transmembrane segment spans residues 7–27 (FTLIELMIVVAIIGVLASTAL). 2 disulfide bridges follow: Cys-56/Cys-71 and Cys-140/Cys-153.

This sequence belongs to the N-Me-Phe pilin family. In terms of assembly, the pili are polar flexible filaments of about 5.4 nanometers diameter and 2.5 micrometers average length; they consist of only a single polypeptide chain arranged in a helical configuration of five subunits per turn in the assembled pilus.

Its subcellular location is the fimbrium. It is found in the membrane. This is Probable minor fimbrial protein (fimZ) from Dichelobacter nodosus (Bacteroides nodosus).